Consider the following 103-residue polypeptide: Histone H4 (103 aa).

The disordered stretch occupies residues 1 to 32; the sequence is MNTQSIGAKGKSKAAKGIAKRHRKQSSLSDSI. The segment covering 10–25 has biased composition (basic residues); it reads GKSKAAKGIAKRHRKQ. Lys16 carries the post-translational modification N6-acetyl-N6-methyllysine; alternate. Position 16 is an N6-methyllysine; alternate (Lys16). The DNA-binding element occupies 20-24; it reads KRHRK. Lys94 is modified (N6-glutaryllysine).

The protein belongs to the histone H4 family. As to quaternary structure, the nucleosome is a histone octamer containing two molecules each of H2A, H2B, H3 and H4 assembled in one H3-H4 heterotetramer and two H2A-H2B heterodimers. The octamer wraps approximately 147 bp of DNA. In terms of processing, glutarylation at Lys-94 (H4K91glu) destabilizes nucleosomes by promoting dissociation of the H2A-H2B dimers from nucleosomes.

It localises to the nucleus. It is found in the chromosome. Functionally, core component of nucleosome. Nucleosomes wrap and compact DNA into chromatin, limiting DNA accessibility to the cellular machineries which require DNA as a template. Histones thereby play a central role in transcription regulation, DNA repair, DNA replication and chromosomal stability. DNA accessibility is regulated via a complex set of post-translational modifications of histones, also called histone code, and nucleosome remodeling. The sequence is that of Histone H4 (HHF1) from Encephalitozoon cuniculi (strain GB-M1) (Microsporidian parasite).